The following is a 207-amino-acid chain: Casparian strip membrane protein 1 (207 aa).

The segment covering 1-12 has biased composition (polar residues); the sequence is MEADSTTINVTE. Positions 1–20 are disordered; sequence MEADSTTINVTETPKERKGK. Over 1 to 48 the chain is Cytoplasmic; the sequence is MEADSTTINVTETPKERKGKAPLLAAPPASSGVKRVLQKAPKGGYKRG. The helical transmembrane segment at 49 to 69 threads the bilayer; it reads LAVFDVVLRLAGIATALGAAI. The Extracellular portion of the chain corresponds to 70-98; the sequence is AMGSTDQTLPFFTQFFQFKAEFDDLPAFT. The helical transmembrane segment at 99–119 threads the bilayer; that stretch reads FFVIANAITAAYLALTIPISI. Topologically, residues 120–131 are cytoplasmic; sequence VCIIRPHLVAPR. The helical transmembrane segment at 132–152 threads the bilayer; that stretch reads VLLIFLDTVMVALTTAAAGGT. The Extracellular segment spans residues 153–184; that stretch reads ASIVYLAHNGNSDANWPAICQQFNDXCQKVSG. The chain crosses the membrane as a helical span at residues 185–205; that stretch reads AVVASFLTVVVLMLLIVLSAF. The Cytoplasmic segment spans residues 206–207; it reads AL.

The protein belongs to the Casparian strip membrane proteins (CASP) family. As to quaternary structure, homodimer and heterodimers.

It localises to the cell membrane. Regulates membrane-cell wall junctions and localized cell wall deposition. Required for establishment of the Casparian strip membrane domain (CSD) and the subsequent formation of Casparian strips, a cell wall modification of the root endodermis that determines an apoplastic barrier between the intraorganismal apoplasm and the extraorganismal apoplasm and prevents lateral diffusion. The sequence is that of Casparian strip membrane protein 1 from Cynara cardunculus var. scolymus (Globe artichoke).